We begin with the raw amino-acid sequence, 215 residues long: Ribose-5-phosphate isomerase A (215 aa).

Substrate contacts are provided by residues T26–T29, D79–D82, and K92–G95. The Proton acceptor role is filled by E101. K119 is a substrate binding site.

This sequence belongs to the ribose 5-phosphate isomerase family. Homodimer.

The enzyme catalyses aldehydo-D-ribose 5-phosphate = D-ribulose 5-phosphate. Its pathway is carbohydrate degradation; pentose phosphate pathway; D-ribose 5-phosphate from D-ribulose 5-phosphate (non-oxidative stage): step 1/1. Its function is as follows. Catalyzes the reversible conversion of ribose-5-phosphate to ribulose 5-phosphate. This chain is Ribose-5-phosphate isomerase A, found in Xanthomonas oryzae pv. oryzae (strain MAFF 311018).